A 191-amino-acid polypeptide reads, in one-letter code: DNA-directed RNA polymerase subunit Rpo3 (191 aa).

This sequence belongs to the archaeal Rpo3/eukaryotic RPB3 RNA polymerase subunit family. As to quaternary structure, part of the RNA polymerase complex. Interacts with Rpo12. Forms an Rpo3-Rpo10-Rpo11-Rpo12 complex upon coexpression.

It is found in the cytoplasm. It carries out the reaction RNA(n) + a ribonucleoside 5'-triphosphate = RNA(n+1) + diphosphate. Its function is as follows. DNA-dependent RNA polymerase (RNAP) catalyzes the transcription of DNA into RNA using the four ribonucleoside triphosphates as substrates. This is DNA-directed RNA polymerase subunit Rpo3 from Methanocaldococcus jannaschii (strain ATCC 43067 / DSM 2661 / JAL-1 / JCM 10045 / NBRC 100440) (Methanococcus jannaschii).